Consider the following 65-residue polypeptide: Small ribosomal subunit protein bS21 (65 aa).

The disordered stretch occupies residues 45-65; that stretch reads GRLKRSRSRRRAQRANEERNS. Basic residues predominate over residues 48 to 57; that stretch reads KRSRSRRRAQ.

This sequence belongs to the bacterial ribosomal protein bS21 family.

This is Small ribosomal subunit protein bS21 from Chlorobium phaeobacteroides (strain DSM 266 / SMG 266 / 2430).